A 541-amino-acid chain; its full sequence is Chaperonin GroEL (541 aa).

Residues 29–32 (TLGP), 86–90 (DGTTT), Gly-413, 478–480 (NAL), and Asp-494 contribute to the ATP site.

The protein belongs to the chaperonin (HSP60) family. In terms of assembly, forms a cylinder of 14 subunits composed of two heptameric rings stacked back-to-back. Interacts with the co-chaperonin GroES.

The protein resides in the cytoplasm. It catalyses the reaction ATP + H2O + a folded polypeptide = ADP + phosphate + an unfolded polypeptide.. Its function is as follows. Together with its co-chaperonin GroES, plays an essential role in assisting protein folding. The GroEL-GroES system forms a nano-cage that allows encapsulation of the non-native substrate proteins and provides a physical environment optimized to promote and accelerate protein folding. The sequence is that of Chaperonin GroEL from Lachnoclostridium phytofermentans (strain ATCC 700394 / DSM 18823 / ISDg) (Clostridium phytofermentans).